Reading from the N-terminus, the 298-residue chain is Tyrosine recombinase XerC (298 aa).

The Core-binding (CB) domain maps to 2–88 (TDLHTDVERY…ALRSFFDWLV (87 aa)). In terms of domain architecture, Tyr recombinase spans 109-288 (HLPKNIDVDD…DFQHLASVYD (180 aa)). Residues Arg-148, Lys-172, His-240, Arg-243, and His-266 contribute to the active site. Tyr-275 serves as the catalytic O-(3'-phospho-DNA)-tyrosine intermediate.

It belongs to the 'phage' integrase family. XerC subfamily. As to quaternary structure, forms a cyclic heterotetrameric complex composed of two molecules of XerC and two molecules of XerD, in which XerC interacts with XerD via its C-terminal region, XerD interacts with XerC via its C-terminal region and so on.

The protein resides in the cytoplasm. With respect to regulation, ftsK may regulate the catalytic switch between XerC and XerD in the heterotetrameric complex during the two steps of the recombination process. Site-specific tyrosine recombinase, which acts by catalyzing the cutting and rejoining of the recombining DNA molecules. Binds cooperatively to specific DNA consensus sequences that are separated from XerD binding sites by a short central region, forming the heterotetrameric XerC-XerD complex that recombines DNA substrates. The complex is essential to convert dimers of the bacterial chromosome into monomers to permit their segregation at cell division. It also contributes to the segregational stability of plasmids. In the complex XerC specifically exchanges the top DNA strands. This Shigella flexneri serotype 5b (strain 8401) protein is Tyrosine recombinase XerC.